Consider the following 346-residue polypeptide: Putative agmatine deiminase (346 aa).

The Amidino-cysteine intermediate role is filled by C333.

It belongs to the agmatine deiminase family.

The enzyme catalyses agmatine + H2O = N-carbamoylputrescine + NH4(+). The chain is Putative agmatine deiminase from Legionella pneumophila (strain Paris).